A 318-amino-acid chain; its full sequence is (1S)-1,7-diacetoxy-luvungin A aldo-keto reductase (318 aa).

Tyr-54 (proton donor) is an active-site residue.

It belongs to the aldo/keto reductase family. In terms of tissue distribution, expressed in flowers, maturing fruits and in juice vesicles.

It carries out the reaction (1S)-1,7-diacetoxy-luvungin A + AH2 + H2O = (1R,2R,3S,8R,10R,11R,15S,16S)-3-(acetyloxy)-15-[(4R)-4-[(2S)-3,3-dimethyloxiran-2-yl]-1,4-dihydroxybutan-2-yl]-2,7,7,11,16-pentamethyl-5-oxo-6-oxatetracyclo[9.7.0.0(2,8).0(12,16)]octadec-12-en-10-yl acetate + acetate + A + H(+). Its pathway is secondary metabolite biosynthesis; terpenoid biosynthesis. Its function is as follows. Aldo-keto reductase involved in the biosynthesis of limonoids triterpene natural products such as limonin, a compound with insecticidal activity responsible for the bitter taste in citrus. Can use (1S)-1,7-diacetoxy-luvungin A as substrate. The chain is (1S)-1,7-diacetoxy-luvungin A aldo-keto reductase from Citrus sinensis (Sweet orange).